Reading from the N-terminus, the 187-residue chain is ATP synthase subunit b, chloroplastic (187 aa).

Residues 29-49 (LAVVLGVLIYLGKGVCAGCIL) traverse the membrane as a helical segment.

Belongs to the ATPase B chain family. F-type ATPases have 2 components, F(1) - the catalytic core - and F(0) - the membrane proton channel. F(1) has five subunits: alpha(3), beta(3), gamma(1), delta(1), epsilon(1). F(0) has four main subunits: a(1), b(1), b'(1) and c(10-14). The alpha and beta chains form an alternating ring which encloses part of the gamma chain. F(1) is attached to F(0) by a central stalk formed by the gamma and epsilon chains, while a peripheral stalk is formed by the delta, b and b' chains.

It localises to the plastid. The protein resides in the chloroplast thylakoid membrane. F(1)F(0) ATP synthase produces ATP from ADP in the presence of a proton or sodium gradient. F-type ATPases consist of two structural domains, F(1) containing the extramembraneous catalytic core and F(0) containing the membrane proton channel, linked together by a central stalk and a peripheral stalk. During catalysis, ATP synthesis in the catalytic domain of F(1) is coupled via a rotary mechanism of the central stalk subunits to proton translocation. In terms of biological role, component of the F(0) channel, it forms part of the peripheral stalk, linking F(1) to F(0). In Angiopteris evecta (Mule's foot fern), this protein is ATP synthase subunit b, chloroplastic.